The sequence spans 809 residues: Carbon monoxide dehydrogenase large chain (809 aa).

Cys-388 serves as a coordination point for Cu(+). Residue Glu-763 coordinates Mo-molybdopterin cytosine dinucleotide.

Dimer of heterotrimers. Each heterotrimer consists of a large, a medium and a small subunit. Cu(+) serves as cofactor. Requires Mo-molybdopterin cytosine dinucleotide as cofactor.

The catalysed reaction is CO + a quinone + H2O = a quinol + CO2. Catalyzes the oxidation of carbon monoxide to carbon dioxide. This Afipia carboxidovorans (strain ATCC 49405 / DSM 1227 / KCTC 32145 / OM5) (Oligotropha carboxidovorans) protein is Carbon monoxide dehydrogenase large chain (coxL).